Consider the following 701-residue polypeptide: Polyribonucleotide nucleotidyltransferase (701 aa).

Residues Asp-487 and Asp-493 each coordinate Mg(2+). A KH domain is found at 554–613; that stretch reads PTMIAMKIDTDKIRDVIGKGGATIRAICEETKASIDIEDDGSIKIFGETKEAAEAARQRV. The region spanning 623–691 is the S1 motif domain; it reads GKIYVGKVER…NRGRIKLSIK (69 aa).

Belongs to the polyribonucleotide nucleotidyltransferase family. In terms of assembly, component of the RNA degradosome, which is a multiprotein complex involved in RNA processing and mRNA degradation. The cofactor is Mg(2+).

Its subcellular location is the cytoplasm. The catalysed reaction is RNA(n+1) + phosphate = RNA(n) + a ribonucleoside 5'-diphosphate. Involved in mRNA degradation. Catalyzes the phosphorolysis of single-stranded polyribonucleotides processively in the 3'- to 5'-direction. The chain is Polyribonucleotide nucleotidyltransferase from Pseudomonas fluorescens (strain SBW25).